The chain runs to 142 residues: Large ribosomal subunit protein uL13 (142 aa).

Belongs to the universal ribosomal protein uL13 family. Part of the 50S ribosomal subunit.

This protein is one of the early assembly proteins of the 50S ribosomal subunit, although it is not seen to bind rRNA by itself. It is important during the early stages of 50S assembly. This is Large ribosomal subunit protein uL13 from Burkholderia mallei (strain NCTC 10247).